The chain runs to 445 residues: UDP-N-acetylmuramoylalanine--D-glutamate ligase (445 aa).

ATP is bound at residue 126 to 132 (GTSGKTT).

It belongs to the MurCDEF family.

The protein localises to the cytoplasm. The catalysed reaction is UDP-N-acetyl-alpha-D-muramoyl-L-alanine + D-glutamate + ATP = UDP-N-acetyl-alpha-D-muramoyl-L-alanyl-D-glutamate + ADP + phosphate + H(+). Its pathway is cell wall biogenesis; peptidoglycan biosynthesis. Functionally, cell wall formation. Catalyzes the addition of glutamate to the nucleotide precursor UDP-N-acetylmuramoyl-L-alanine (UMA). The chain is UDP-N-acetylmuramoylalanine--D-glutamate ligase from Nitratidesulfovibrio vulgaris (strain DSM 19637 / Miyazaki F) (Desulfovibrio vulgaris).